Consider the following 284-residue polypeptide: Hypersensitive-induced response protein 1 (284 aa).

Residue G2 is the site of N-myristoyl glycine attachment.

As to quaternary structure, interacts with LRR1.

Its subcellular location is the cell membrane. Its function is as follows. Positive regulator of hypersensitive response (HR)-like cell death. May be involved in potassium ion channel regulation. In Oryza sativa subsp. japonica (Rice), this protein is Hypersensitive-induced response protein 1.